Consider the following 419-residue polypeptide: 3-isopropylmalate dehydratase large subunit (419 aa).

[4Fe-4S] cluster contacts are provided by cysteine 300, cysteine 360, and cysteine 363.

It belongs to the aconitase/IPM isomerase family. LeuC type 2 subfamily. As to quaternary structure, heterodimer of LeuC and LeuD. It depends on [4Fe-4S] cluster as a cofactor.

It catalyses the reaction (2R,3S)-3-isopropylmalate = (2S)-2-isopropylmalate. Its pathway is amino-acid biosynthesis; L-leucine biosynthesis; L-leucine from 3-methyl-2-oxobutanoate: step 2/4. Functionally, catalyzes the isomerization between 2-isopropylmalate and 3-isopropylmalate, via the formation of 2-isopropylmaleate. The polypeptide is 3-isopropylmalate dehydratase large subunit (Clostridium botulinum (strain Eklund 17B / Type B)).